We begin with the raw amino-acid sequence, 141 residues long: Large ribosomal subunit protein uL11 (141 aa).

It belongs to the universal ribosomal protein uL11 family. As to quaternary structure, part of the ribosomal stalk of the 50S ribosomal subunit. Interacts with L10 and the large rRNA to form the base of the stalk. L10 forms an elongated spine to which L12 dimers bind in a sequential fashion forming a multimeric L10(L12)X complex. One or more lysine residues are methylated.

Forms part of the ribosomal stalk which helps the ribosome interact with GTP-bound translation factors. In Helicobacter acinonychis (strain Sheeba), this protein is Large ribosomal subunit protein uL11.